The primary structure comprises 2919 residues: MTTPPLVIPLHVHGRSYELLAGYHEVDWQEIEELEETDVRGDGFCLYHSILYSMGLSKENSRTTEFMIKLRSNPAICQLDQEMQLSLMKQLDPNDSSAWGEDIAIGFIAIILRIKIIAYQTVDGKLFKTIYGAEFESTIRIRNYGNYHFKSLETDFDHKVKLRSKIEEFLRMPVEDCESISLWHASVYKPIVSDSLSGHKSFSNVDELIGSIISSMYKIMDNGDQCFLWSAMRMVARPSEKLYALAVFLGFNLKFYHVRKRAEKLTAKLESDHTNLGVKLIEVYEVSEPTRSTWVLKPGGSRITETRNFVIEEIIDNRRSLESLFVSSSEYPAELCSQKLSAIKDRIALMFGFINRTPENSGRELYINTYYLKRILQVERNVIRDSLRSQPAVGMIQIIRLPTAFGTYNPEVGTLLLAQTGLIYRLGTTTRVQMEVRRSPSVISRSHKITSFPETQKHNNNLYDYAPRTQETFYHPNAEIYEAVDVKTPSVITEIVDNHIVIKLNTDDKGWSVSDSIKQDFVYRKRLMDAKNIVHDFVFDILSTETDKSFKGADLSIGGISDNWSPDVIISRESDPQYEDIVVYEFTTRSTESIESLLRSVEVKSLRYKEAIQERAITLKKRISYYTICVSLDAVATNLLSLPADVCRELIIRLRVANQVKIQLADNDINLDSATLLAPDIYRIKEMFRESFPNNKFIHPITKEMYEHFVNPMISGEKDYVANLKSIIDKETRDEQRKNLESLKVVDGKKYTERKAETALNEMSQAEEHYRSYFENDNFRSTLKAPVQLPLIIPDVSSQDNQFSNKELSDRIRKKPIDHPIYNIWDQAVNKRNCSIALGHLDELEISMLEGQVAKKVEESYKKDRSQYNRTTLLTNMKEDIYLAERGINAKKRLEEPDVKFYRDQSKRPFHPFVSETRDIEQFTQKECLELNEESGHCSLINVEDLVLSALELHEVGDLEHLWNNIKAHSKTKFALYAKFISDLATELAISLSQNCKEDTYVVKKLRDFSCYVLIKPVNLKSNVFFSLYIPSNIYKSHNTTFKTLIGSPESGYMTDFVSANVSKLVNWVRCEAMMLAQRGFWREFYAVAPSIEEQDGMAEPDSVCQMMSWTLLILLNDKHQLEEMITVSRFVHMEGFVTFPAWPKPYKMFDKLSVTPRSRLECLVIKRLIMLMKHYSENPIKFMIEDEKKKWFGFKNMFLLDCNGKLADLSDQDQMLNLFYLGYLKNKDEEVEDNGMGQLLTKILGFESAMPKTRDFLGMKDPEYGTIKKHEFSISYVKDLCDKFLDRLKKTHGIKDPITYLGDKIAKFLSTQFIETMASLKASSNFSEDYYLYTPSRRLKNQEQSRSKHVIDAGGNISASVKGKLYHRSKVIEKLTTLIKDETPGKELKIVVDLLPKAMEVLNKNECMHICIFKKNQHGGLREIYVLNIFERIMQKTVEDFSRAILECCPSETMTSPKNKFRIPELHNMEARKTLKNEYMTISTSDDASKWNQGHYVSKFMCMLLRLTPTYYHGFLVQALQLWHHKKIFLGDQLLQLFNQNAMLNTMDTTLMKVFQAYKGEIQVPWMKAGRSYIETETGMMQGILHYTSSLFHAIFLDQLAEECRRDINRAIKTINNKENEKVSCIVNNMESSDDSSFIISIPNFKENEAAQLYLLCVVNSWFRKKEKLGTYLGIYKSPKSTTQTLFVMEFNSEFFFSGDVHRPTFRWVNAAVLIGEQETLSGIQEELSNTLKDVIEGGGTYALTFIVQVAQAMIHYRMLGSSASSVWPAYETLLKNSYDPALGFFLMDNPKCAGLLGFNYNVWIACTTTPLGEKYHEMIQEEMKAESQSLKSVTEDTINTGLVSRTTMVGFGNKKRWMKLMTTLNLSADVYEKIEEEPRVYFFHAATAEQIIQKIAIKMKSPGVIQSLSKGNMLARKIASSVFFISRHIVFTMSAYYDADPETRKTSLLKELINSSKIPQRHDYLQEPHTLKPTKVEVDEDSWEFKSAKEECVRVLKQRIKIHTGREERSISLLFENMAKSMIGRCTDQYDVRENVSILACALKMNYSIFKKDAAPNRYLLDEKNLVYPLIGKEVSVYVKSDKVHIEISEKKERLSTKLFNIDKMKDIEETLSLLFPSYGDYLSLKETIDQVTFQSAIHKVNERRRVRADVHLTGTEGFSKLPMYTAAVWAWFDVKTIPAHDSIYRTIWKVYKEQYSWLSDTLKETVEKGPFKTVQGVVNFISRAGVRSRVVHLVGSFGKNVRGSINLVTAIKDNFSNGLVFKGNIFDIKAKKTRESLDNYLSICTTLSQAPITKHDKNQILRSLFVSGPRIQYVSSQFGSRRNRMSILQEVVADDPTLHWPDQDTSQKQLEDKFRELAHKELPFLTEKVFHDYLEKIEQLMKENTHLGGRDVDASKTPYVLARANDIEIHCYELWREYDEDEDEAYQAYCSEVEAAMDQEKLNALIERYHVDPKANWIQMLMNGEIETVEELNKLDKGFESHRLALVERIRVGKLGILGSYTKCQQRIEELDGEGNKTHRYTGEGIWRGSFDDSDVCIVVQDLKKTRESYLKCVVFSKVSDYKVLMGHLKTWCREHHISNDEFPTCTQKELLSYGVTKSSVLLYKMNGMKMLRNMEKGIPLYWNPSLSTRSQTYINWLAVDITDHSLRLRNRTVENGRVVNQTIMVVPLYKTDVQIFKTSPVDLEQDVQNDRLKLLSVTKAGELRWLQDWIMWRSSAVDDLNILNQVRRNKAARDHFNAKPEFKKWIKELWDYALDTTLINKKVFITTQGSESQSTVSSGDSDSAVAPLTDEAVDEIHDLLDKELEKGTLKQIIHDATIDAQLDIPAIESFLAEEMEVFKSSLAKSHPLLLNYVRYMIQEIGVTNFRSLIDSFNQKDPLKSVSLSILDLKEVFKFVYQDINDAYFVKQEEDHKFDF.

Positions 86–675 (SLMKQLDPND…DNDINLDSAT (590 aa)) are endonuclease. The Mn(2+) site is built by H535, D567, and E585. K604 (for endonuclease activity) is an active-site residue. One can recognise a RdRp catalytic domain in the interval 1472 to 1671 (ARKTLKNEYM…SWFRKKEKLG (200 aa)). Position 1636 (D1636) interacts with Mg(2+). Positions 2494–2632 (RVGKLGILGS…PLYWNPSLST (139 aa)) are cap-binding.

Belongs to the Bunyavirales RNA polymerase family. In terms of assembly, homomultimer. Interacts with glycoprotein N; this interaction allows efficient polymerase packaging into virus particles. Interacts with nucleoprotein N. Requires Mn(2+) as cofactor. It depends on Mg(2+) as a cofactor.

The protein resides in the host Golgi apparatus. The protein localises to the host endoplasmic reticulum. Its subcellular location is the host endoplasmic reticulum-Golgi intermediate compartment. It localises to the virion. The catalysed reaction is RNA(n) + a ribonucleoside 5'-triphosphate = RNA(n+1) + diphosphate. Its function is as follows. RNA-dependent RNA polymerase, which is responsible for the replication and transcription of the viral RNA genome using antigenomic RNA as an intermediate. During transcription, synthesizes subgenomic RNAs and assures their capping by a cap-snatching mechanism, which involves the endonuclease activity cleaving the host capped pre-mRNAs. These short capped RNAs are then used as primers for viral transcription. The 3'-end of subgenomic mRNAs molecules are not polyadenylated. During replication, the polymerase binds the 5' and 3' vRNA extremities at distinct sites. In turn, significant conformational changes occur in the polymerase and in vRNA to initiate active RNA synthesis. As a consequence of the use of the same enzyme for both transcription and replication, these mechanisms need to be well coordinated. In Avena sativa (Oat), this protein is RNA-directed RNA polymerase L.